Here is a 64-residue protein sequence, read N- to C-terminus: Large ribosomal subunit protein uL30 (64 aa).

Residues methionine 1–glycine 22 are disordered.

Belongs to the universal ribosomal protein uL30 family. As to quaternary structure, part of the 50S ribosomal subunit.

The polypeptide is Large ribosomal subunit protein uL30 (Acidiphilium cryptum (strain JF-5)).